We begin with the raw amino-acid sequence, 360 residues long: Peptide chain release factor 1 (360 aa).

Gln236 carries the N5-methylglutamine modification.

This sequence belongs to the prokaryotic/mitochondrial release factor family. Methylated by PrmC. Methylation increases the termination efficiency of RF1.

It localises to the cytoplasm. Peptide chain release factor 1 directs the termination of translation in response to the peptide chain termination codons UAG and UAA. The protein is Peptide chain release factor 1 of Methylococcus capsulatus (strain ATCC 33009 / NCIMB 11132 / Bath).